Here is a 107-residue protein sequence, read N- to C-terminus: U1-lycotoxin-Ls1h (107 aa).

An N-terminal signal peptide occupies residues 1-20; it reads MMKVLVVVALLVTLISYSSS. Residues 21–41 constitute a propeptide that is removed on maturation; that stretch reads EGIDDLEADELLSLMANEQTR. 3 cysteine pairs are disulfide-bonded: cysteine 44/cysteine 59, cysteine 51/cysteine 68, and cysteine 70/cysteine 84.

This sequence belongs to the neurotoxin 19 (CSTX) family. 04 (U1-Lctx) subfamily. In terms of tissue distribution, expressed by the venom gland.

It is found in the secreted. The chain is U1-lycotoxin-Ls1h from Lycosa singoriensis (Wolf spider).